An 88-amino-acid polypeptide reads, in one-letter code: Cell division topological specificity factor (88 aa).

This sequence belongs to the MinE family.

In terms of biological role, prevents the cell division inhibition by proteins MinC and MinD at internal division sites while permitting inhibition at polar sites. This ensures cell division at the proper site by restricting the formation of a division septum at the midpoint of the long axis of the cell. The chain is Cell division topological specificity factor from Pseudoalteromonas translucida (strain TAC 125).